The sequence spans 744 residues: Zinc finger protein 366 (744 aa).

The disordered stretch occupies residues 206 to 228; that stretch reads KQPPEPLLPRKAEPQESEETKQK. Residues 213–228 show a composition bias toward basic and acidic residues; it reads LPRKAEPQESEETKQK. C2H2-type zinc fingers lie at residues 253-275, 281-303, 309-331, 337-359, 365-387, 393-415, 421-443, 449-471, 477-499, 505-527, and 533-556; these read WQCPTCEKSYTSKYNLVTHILGH, HACTHCGKLFKQLSHLHTHMLTH, HKCQVCHKAFTQTSHLKRHMMQH, HNCRVCGRGFAYPSELKAHEAKH, NICVECGLDFPTLAQLKRHLTTH, YNCSECDKTFQYPSQLQNHMMKH, YICSECGMEFVQPHHLKQHSLTH, HKCGICGREFTLLANMKRHVLIH, YQCHLCYKSFVQKQTLKAHMIVH, FKCKLCGKEFNRMHNLMGHMHLH, and FKCLYCPSKFTLKGNLTRHMKVKH. An interaction with NRIP1 region spans residues 455 to 744; sequence GREFTLLANM…MEKQAVLLGI (290 aa). A PXDLS motif is present at residues 590 to 594; that stretch reads PFDLS. Disordered stretches follow at residues 603–627 and 664–692; these read VFQSDGESAQGSHCHEEEEEDNCYE and KEEKEDASKGEWEKRSKGDLGAEGGQERD.

Interacts with ESR1 and NRIP1. Interacts (via PXDLS motif) with CTBP1. As to expression, expressed in immature and mature dendritic cells (DCs). Not detected in other blood cell types.

Its subcellular location is the nucleus. In terms of biological role, has transcriptional repression activity. Acts as a corepressor of ESR1; the function seems to involve CTBP1 and histone deacetylases. The polypeptide is Zinc finger protein 366 (Homo sapiens (Human)).